Consider the following 521-residue polypeptide: Cytochrome P450 1A1 (521 aa).

Phe-229 contacts substrate. Cys-463 is a binding site for heme.

The protein belongs to the cytochrome P450 family. Requires heme as cofactor.

The protein resides in the endoplasmic reticulum membrane. Its subcellular location is the microsome membrane. The catalysed reaction is an organic molecule + reduced [NADPH--hemoprotein reductase] + O2 = an alcohol + oxidized [NADPH--hemoprotein reductase] + H2O + H(+). Its function is as follows. Cytochromes P450 are a group of heme-thiolate monooxygenases. They oxidize a variety of structurally unrelated compounds, including steroids, fatty acids, and xenobiotics. This chain is Cytochrome P450 1A1 (cyp1a1), found in Chelon saliens (Leaping mullet).